Consider the following 116-residue polypeptide: Ribonuclease P protein component 2 (116 aa).

Belongs to the eukaryotic/archaeal RNase P protein component 2 family. In terms of assembly, consists of a catalytic RNA component and at least 4-5 protein subunits.

The protein localises to the cytoplasm. It carries out the reaction Endonucleolytic cleavage of RNA, removing 5'-extranucleotides from tRNA precursor.. Functionally, part of ribonuclease P, a protein complex that generates mature tRNA molecules by cleaving their 5'-ends. This Methanosarcina mazei (strain ATCC BAA-159 / DSM 3647 / Goe1 / Go1 / JCM 11833 / OCM 88) (Methanosarcina frisia) protein is Ribonuclease P protein component 2.